The primary structure comprises 1207 residues: DNA-directed RNA polymerase subunit beta' (1207 aa).

The Zn(2+) site is built by cysteine 60, cysteine 62, cysteine 75, and cysteine 78. Mg(2+) is bound by residues aspartate 450, aspartate 452, and aspartate 454. Zn(2+) contacts are provided by cysteine 819, cysteine 893, cysteine 900, and cysteine 903.

This sequence belongs to the RNA polymerase beta' chain family. The RNAP catalytic core consists of 2 alpha, 1 beta, 1 beta' and 1 omega subunit. When a sigma factor is associated with the core the holoenzyme is formed, which can initiate transcription. It depends on Mg(2+) as a cofactor. Zn(2+) is required as a cofactor.

The enzyme catalyses RNA(n) + a ribonucleoside 5'-triphosphate = RNA(n+1) + diphosphate. Functionally, DNA-dependent RNA polymerase catalyzes the transcription of DNA into RNA using the four ribonucleoside triphosphates as substrates. The polypeptide is DNA-directed RNA polymerase subunit beta' (Streptococcus pyogenes serotype M3 (strain ATCC BAA-595 / MGAS315)).